A 745-amino-acid polypeptide reads, in one-letter code: Cellulose synthase 1 catalytic subunit [UDP-forming] (745 aa).

The next 3 helical transmembrane spans lie at 29 to 49, 106 to 126, and 153 to 173; these read YVVG…TLSL, GILG…LFLS, and IFIP…LGAL. Residues 147–240 are catalytic subdomain A; that stretch reads EWPTVDIFIP…HILILDCDHI (94 aa). The active site involves Asp189. Substrate contacts are provided by Asp236 and Asp238. Residues 317–377 form a catalytic subdomain B region; it reads KAIEEIGGFA…GQRMRWARGM (61 aa). Residue Asp333 is part of the active site. 6 helical membrane-spanning segments follow: residues 407–427, 430–450, 468–488, 515–535, 547–567, and 649–669; these read FFFA…LFFS, IIAA…FHSI, VYET…MLFP, NIIF…ALIF, ALNC…ISVG, and AVFT…RFVF. The PilZ domain occupies 572–670; that stretch reads QLRQSHRIEA…EAAVVRFVFG (99 aa). Over residues 708-717 the composition is skewed to basic residues; the sequence is IAHSRPKKKP. A disordered region spans residues 708-745; the sequence is IAHSRPKKKPIALPVERREPTTSQGGQKQEGKISRAAS. The segment covering 736–745 has biased composition (basic and acidic residues); that stretch reads QEGKISRAAS.

The protein belongs to the glycosyltransferase 2 family. Mg(2+) serves as cofactor.

It localises to the cell inner membrane. The catalysed reaction is [(1-&gt;4)-beta-D-glucosyl](n) + UDP-alpha-D-glucose = [(1-&gt;4)-beta-D-glucosyl](n+1) + UDP + H(+). The protein operates within glycan metabolism; bacterial cellulose biosynthesis. Its activity is regulated as follows. Activated by bis-(3'-5') cyclic diguanylic acid (c-di-GMP). In terms of biological role, catalytic subunit of cellulose synthase. It polymerizes uridine 5'-diphosphate glucose to cellulose. The thick cellulosic mats generated by this enzyme probably provide a specialized protective environment to the bacterium. The polypeptide is Cellulose synthase 1 catalytic subunit [UDP-forming] (bcsAI) (Komagataeibacter xylinus (Gluconacetobacter xylinus)).